Here is a 97-residue protein sequence, read N- to C-terminus: YcgL domain-containing protein PFLU_1517 (97 aa).

The 85-residue stretch at 3 to 87 folds into the YcgL domain; that stretch reads RICSIYRSKK…AEDEYIEHLP (85 aa).

In Pseudomonas fluorescens (strain SBW25), this protein is YcgL domain-containing protein PFLU_1517.